Consider the following 417-residue polypeptide: MLAFKSDFLNIMSERGFIHQISDEKGLDALFSKEVVSAYIGFDPTASSLHAGSLLQIMMLYWLQKTGHRPIVLMGGGTGLIGDPSFKDEARRLLTQDDIAANIADIKKVFARYLTFGERETDSCIVNNAEWLCTLNYLEFLRDIGKHFSVNRMLSFDSVRLRLEREHSLSFLEFNYMILQAYDFVELYKRYGLRMQMGGSDQWGNIINGIELGHRLGTPQLYALTSPLLTTSSGAKMGKSLNGAVWLNADMLSPYQFWQYWRNTEDADVTRFLKLYTPLPMDEILKLSALQGTEINEAKKILATEITAMLHGRDLANAVAETARKTFEERTLGENLPTFEINANDLKMGTGLLILLVQAGLSKSNSEARRHIQGGGVRVNDHIIEDETHLIREEDINAQGIIKLSFGKKKHVLIKPL.

Y39 is a binding site for L-tyrosine. The 'HIGH' region motif lies at 44 to 53 (PTASSLHAGS). Positions 176 and 180 each coordinate L-tyrosine. Positions 236–240 (KMGKS) match the 'KMSKS' region motif. Residue K239 coordinates ATP. An S4 RNA-binding domain is found at 350 to 417 (TGLLILLVQA…KKKHVLIKPL (68 aa)).

This sequence belongs to the class-I aminoacyl-tRNA synthetase family. TyrS type 1 subfamily. In terms of assembly, homodimer.

Its subcellular location is the cytoplasm. The enzyme catalyses tRNA(Tyr) + L-tyrosine + ATP = L-tyrosyl-tRNA(Tyr) + AMP + diphosphate + H(+). Its function is as follows. Catalyzes the attachment of tyrosine to tRNA(Tyr) in a two-step reaction: tyrosine is first activated by ATP to form Tyr-AMP and then transferred to the acceptor end of tRNA(Tyr). The protein is Tyrosine--tRNA ligase of Bartonella henselae (strain ATCC 49882 / DSM 28221 / CCUG 30454 / Houston 1) (Rochalimaea henselae).